Here is a 188-residue protein sequence, read N- to C-terminus: Elongation factor P (188 aa).

Belongs to the elongation factor P family.

The protein resides in the cytoplasm. Its pathway is protein biosynthesis; polypeptide chain elongation. Involved in peptide bond synthesis. Stimulates efficient translation and peptide-bond synthesis on native or reconstituted 70S ribosomes in vitro. Probably functions indirectly by altering the affinity of the ribosome for aminoacyl-tRNA, thus increasing their reactivity as acceptors for peptidyl transferase. This Leptospira biflexa serovar Patoc (strain Patoc 1 / Ames) protein is Elongation factor P.